The sequence spans 624 residues: Probable potassium transport system protein Kup (624 aa).

The next 12 membrane-spanning stretches (helical) occupy residues leucine 13–methionine 33, isoleucine 52–isoleucine 72, tryptophan 102–threonine 122, proline 139–isoleucine 159, leucine 170–isoleucine 190, phenylalanine 208–threonine 228, tryptophan 249–leucine 269, methionine 291–phenylalanine 311, isoleucine 339–phenylalanine 359, alanine 368–methionine 388, threonine 399–valine 419, and isoleucine 421–threonine 441.

Belongs to the HAK/KUP transporter (TC 2.A.72) family.

The protein resides in the cell inner membrane. The catalysed reaction is K(+)(in) + H(+)(in) = K(+)(out) + H(+)(out). Functionally, transport of potassium into the cell. Likely operates as a K(+):H(+) symporter. This chain is Probable potassium transport system protein Kup, found in Thiobacillus denitrificans (strain ATCC 25259 / T1).